The sequence spans 608 residues: MTTSALRRQVKNIVHNYSEAEIKVREATSNDPWGPPSSLMSEIADLTFNTVAFAEVMGMVWRRLNDSGKNWRHVYKALTLLDYLLKTGSERVAHQCRENLYTIQTLKDFQYIDRDGKDQGVNVREKVKQVMALLKDEERLRQERTHALKTKERMALEGMGIGSGQLGFSRRSRGSPSSYTSASSSPRYASDLEQARPQTSGEEELQLQLALAMSREEAEKGGRSWKGDDFPVANGAEPAGQRRRDREPEREERKEEEKLKTSQSSILDLADVFAPAPALPSTHCSADPWDIPGLRPNTEPSGSSWGPSADPWSPVPSGNALSRSQPWDLLPTLSSSEPWGRTPVLPSGPPITDPWAPSSPTPKLPSTGVDPWGASVETSNTSALGGASPFDPFAKPLESTEPMESRDSAQALPKGKSPSPVELDPFGDSSPSCKQNGVKETEALDLGVLGEALTQQPGKEARPCRTPESFLGPSASSLVNLDSLVKAPLAARTRNPFLTGLSAPSPTNPFGAGEQGRPTLNQMRTGSPALGLPPGGPVGVPLGSMTYSASLPLPLSSVPVGATLPASVSVFPQAGAFAPPPASLPQPLLPTSDPVGPLPPQAGTNPFL.

The a 1,2-diacyl-sn-glycero-3-phospho-(1D-myo-inositol-4,5-bisphosphate) site is built by Arg8, Lys11, Arg25, Asn30, Arg63, and His73. The ENTH domain occupies Asn12–Arg144. Disordered regions lie at residues Thr150–Ile266 and Ser281–Ala475. A compositionally biased stretch (low complexity) spans Gly174–Ala189. A phosphoserine mark is found at Ser184 and Ser185. A UIM domain is found at Glu202–Gly221. 2 stretches are compositionally biased toward basic and acidic residues: residues Ser214 to Asp229 and Gly240 to Lys260. Repeat copies occupy residues Asp287–Trp289, Asp310–Trp312, Glu337–Trp339, Asp353–Trp355, Asp370–Trp372, Asn495–Phe497, and Asn508–Phe510. A 5 X 3 AA repeats of [DE]-P-W region spans residues Asp287–Trp372. Pro residues predominate over residues Pro346–Lys363. Positions Asn495 to Phe607 are 3 X 3 AA repeats of N-P-F. Disordered regions lie at residues Leu498–Leu530 and Gly575–Leu608. Positions Ala578–Leu588 are enriched in pro residues. Repeat unit 3 spans residues Asn605 to Phe607.

The protein belongs to the epsin family.

The protein resides in the cytoplasm. The protein localises to the cell cortex. It is found in the perinuclear region. Its subcellular location is the cytoplasmic vesicle. It localises to the clathrin-coated vesicle. The protein resides in the nucleus. This Rattus norvegicus (Rat) protein is Epsin-3 (Epn3).